Reading from the N-terminus, the 317-residue chain is Melanocyte-stimulating hormone receptor (317 aa).

At 1–37 the chain is on the extracellular side; the sequence is MVWQGPQRRLLGSLNGTSPATPHFELAANQTGPRCLE. 2 N-linked (GlcNAc...) asparagine glycosylation sites follow: Asn-15 and Asn-29. The helical transmembrane segment at 38–63 threads the bilayer; sequence VSIPNGLFLSLGLVSVVENVLVVAAI. Topologically, residues 64–72 are cytoplasmic; the sequence is AKNRNLHSP. Residues 73-93 form a helical membrane-spanning segment; sequence MYYFIGCLAVSDLLVSVTNVL. Residues 94 to 118 lie on the Extracellular side of the membrane; sequence ETAVMLLVEAGALAAQAAVVQQLDD. The helical transmembrane segment at 119-140 threads the bilayer; sequence IIDVLICGSMVSSLCFLGAIAV. At 141 to 163 the chain is on the cytoplasmic side; it reads DRYLSIFYALRYHSIVTLPRAWR. The helical transmembrane segment at 164-183 threads the bilayer; the sequence is AISAIWVASVLSSTLFIAYY. The Extracellular portion of the chain corresponds to 184 to 191; the sequence is NHTAVLLC. Residues 192-211 form a helical membrane-spanning segment; sequence LVSFFVAMLVLMAVLYVHML. Over 212 to 240 the chain is Cytoplasmic; the sequence is ARARQHARGIARLRKRQHSVHQGFGLKGA. The helical transmembrane segment at 241–266 threads the bilayer; sequence ATLTILLGIFFLCWGPFFLHLSLMVL. Residues 267–279 are Extracellular-facing; that stretch reads CPQHPICGCVFQN. Residues 280–300 traverse the membrane as a helical segment; it reads FNLFLTLIICNSIIDPFIYAF. Topologically, residues 301–317 are cytoplasmic; the sequence is RSQELRKTLQEVVLCSW. The S-palmitoyl cysteine moiety is linked to residue Cys-315.

Belongs to the G-protein coupled receptor 1 family. In terms of assembly, interacts with MGRN1, but does not undergo MGRN1-mediated ubiquitination; this interaction competes with GNAS-binding and thus inhibits agonist-induced cAMP production. Interacts with OPN3; the interaction results in a decrease in MC1R-mediated cAMP signaling and ultimately a decrease in melanin production in melanocytes.

Its subcellular location is the cell membrane. In terms of biological role, receptor for MSH (alpha, beta and gamma) and ACTH. The activity of this receptor is mediated by G proteins which activate adenylate cyclase. Mediates melanogenesis, the production of eumelanin (black/brown) and phaeomelanin (red/yellow), via regulation of cAMP signaling in melanocytes. The chain is Melanocyte-stimulating hormone receptor (MC1R) from Canis lupus familiaris (Dog).